A 540-amino-acid chain; its full sequence is Transcription initiation factor IIF subunit alpha (540 aa).

Over residues 1–26 (MDSQETKVFENVKQENPDEKKPKVEE) the composition is skewed to basic and acidic residues. 2 disordered regions span residues 1-39 (MDSQ…QSQQ) and 70-106 (IDPS…SSSN). 2 stretches are compositionally biased toward polar residues: residues 29–39 (SQNNASTQSQQ) and 89–106 (APSS…SSSN). Ser-259 and Ser-261 each carry phosphoserine. The stretch at 280–382 (MEGNEEDNKK…REEKLKSRFS (103 aa)) forms a coiled coil. The segment at 341–416 (YESDEEDEDP…SSQLQSPNTS (76 aa)) is disordered. The segment covering 359–369 (SEEEVLQEEEE) has biased composition (acidic residues). Positions 381–416 (FSANASKTNTPRPLERTPSSVSPVKASSQLQSPNTS) are enriched in polar residues. Ser-399 carries the phosphoserine modification.

It belongs to the TFIIF alpha subunit family. In terms of assembly, component of the fcp1/TFIIF/polII complex via interaction of tfg3 with both tfg1/TFIIF-alpha and tfg2/TFIIF-beta subunits.

The protein resides in the nucleus. Its function is as follows. TFIIF is a general transcription initiation factor that binds to RNA polymerase II and helps to recruit it to the initiation complex in collaboration with TFIIB. It promotes transcription elongation. This chain is Transcription initiation factor IIF subunit alpha (tfg1), found in Schizosaccharomyces pombe (strain 972 / ATCC 24843) (Fission yeast).